The sequence spans 389 residues: 23S rRNA (uracil(747)-C(5))-methyltransferase RlmC (389 aa).

Positions 12, 20, 23, and 99 each coordinate [4Fe-4S] cluster. Residues glutamine 224, phenylalanine 253, glutamate 274, and asparagine 321 each coordinate S-adenosyl-L-methionine. The active-site Nucleophile is cysteine 348.

It belongs to the class I-like SAM-binding methyltransferase superfamily. RNA M5U methyltransferase family. RlmC subfamily.

It carries out the reaction uridine(747) in 23S rRNA + S-adenosyl-L-methionine = 5-methyluridine(747) in 23S rRNA + S-adenosyl-L-homocysteine + H(+). Its function is as follows. Catalyzes the formation of 5-methyl-uridine at position 747 (m5U747) in 23S rRNA. The polypeptide is 23S rRNA (uracil(747)-C(5))-methyltransferase RlmC (Shewanella sp. (strain W3-18-1)).